The sequence spans 366 residues: 1-aminocyclopropane-1-carboxylate oxidase homolog 12 (366 aa).

The Fe2OG dioxygenase domain occupies 215-314 (KTLLMICHYY…RISVASFFSS (100 aa)). Residues histidine 239, aspartate 241, and histidine 295 each coordinate Fe cation. Position 305 (arginine 305) interacts with 2-oxoglutarate.

The protein belongs to the iron/ascorbate-dependent oxidoreductase family. It depends on Fe(2+) as a cofactor.

This Arabidopsis thaliana (Mouse-ear cress) protein is 1-aminocyclopropane-1-carboxylate oxidase homolog 12.